A 209-amino-acid chain; its full sequence is Large ribosomal subunit protein uL3 (209 aa).

A disordered region spans residues 132–153; that stretch reads ATHGNSLSHRVPGSIGQNQTPG. The residue at position 150 (Q150) is an N5-methylglutamine.

The protein belongs to the universal ribosomal protein uL3 family. As to quaternary structure, part of the 50S ribosomal subunit. Forms a cluster with proteins L14 and L19. Post-translationally, methylated by PrmB.

In terms of biological role, one of the primary rRNA binding proteins, it binds directly near the 3'-end of the 23S rRNA, where it nucleates assembly of the 50S subunit. This is Large ribosomal subunit protein uL3 from Erwinia tasmaniensis (strain DSM 17950 / CFBP 7177 / CIP 109463 / NCPPB 4357 / Et1/99).